The chain runs to 436 residues: 3-ketoacyl-CoA thiolase (436 aa).

Cys-99 functions as the Acyl-thioester intermediate in the catalytic mechanism. Active-site proton acceptor residues include His-392 and Cys-422.

It belongs to the thiolase-like superfamily. Thiolase family. In terms of assembly, heterotetramer of two alpha chains (FadJ) and two beta chains (FadI).

It is found in the cytoplasm. It carries out the reaction an acyl-CoA + acetyl-CoA = a 3-oxoacyl-CoA + CoA. The protein operates within lipid metabolism; fatty acid beta-oxidation. In terms of biological role, catalyzes the final step of fatty acid oxidation in which acetyl-CoA is released and the CoA ester of a fatty acid two carbons shorter is formed. In Shigella boydii serotype 18 (strain CDC 3083-94 / BS512), this protein is 3-ketoacyl-CoA thiolase.